The sequence spans 325 residues: Glutarate 2-hydroxylase (325 aa).

Positions 160, 162, and 292 each coordinate Fe cation.

Belongs to the glutarate hydroxylase family. As to quaternary structure, homotetramer. Fe(2+) serves as cofactor.

The catalysed reaction is glutarate + 2-oxoglutarate + O2 = (S)-2-hydroxyglutarate + succinate + CO2. Its pathway is amino-acid degradation. Functionally, acts as an alpha-ketoglutarate-dependent dioxygenase catalyzing hydroxylation of glutarate (GA) to L-2-hydroxyglutarate (L2HG). Functions in a L-lysine degradation pathway that proceeds via cadaverine, glutarate and L-2-hydroxyglutarate. In Escherichia coli O17:K52:H18 (strain UMN026 / ExPEC), this protein is Glutarate 2-hydroxylase.